We begin with the raw amino-acid sequence, 213 residues long: MGSNYIVIEGLEGAGKTTARDVVVETLEQLGIRNMIFTREPGGTQLAEKLRSLVLDIRSVGDEVITDKAEVLMFYAARVQLVETVIKPALAQGVWVIGDRHDLSTQAYQGGGRGIDQTMLATLRDAVLGDFRPDLTLYLDVTPEVGLKRARARGDLDRIEQESFDFFNRTRARYLELAAQDSRIRTIDATQPLDAVMRDIRATVTKWVQEQAA.

Residue 10–17 (GLEGAGKT) participates in ATP binding.

The protein belongs to the thymidylate kinase family.

It catalyses the reaction dTMP + ATP = dTDP + ADP. Its function is as follows. Phosphorylation of dTMP to form dTDP in both de novo and salvage pathways of dTTP synthesis. The polypeptide is Thymidylate kinase (Salmonella dublin (strain CT_02021853)).